Consider the following 471-residue polypeptide: tRNA-2-methylthio-N(6)-dimethylallyladenosine synthase (471 aa).

The 118-residue stretch at 29 to 146 (KKFHIKTYGC…LPELIAKVNR (118 aa)) folds into the MTTase N-terminal domain. [4Fe-4S] cluster is bound by residues Cys-38, Cys-74, Cys-109, Cys-187, Cys-191, and Cys-194. The Radical SAM core domain occupies 173–405 (RVPQSSAFLS…QQLLKEKQLE (233 aa)). The 60-residue stretch at 408–467 (KKMIGKTVTVLFDKKHPDKISGRTEYMQQVFSDDSNLLDKIVTMRVEDASTFTLKCTAED) folds into the TRAM domain.

This sequence belongs to the methylthiotransferase family. MiaB subfamily. Monomer. [4Fe-4S] cluster is required as a cofactor.

Its subcellular location is the cytoplasm. It catalyses the reaction N(6)-dimethylallyladenosine(37) in tRNA + (sulfur carrier)-SH + AH2 + 2 S-adenosyl-L-methionine = 2-methylsulfanyl-N(6)-dimethylallyladenosine(37) in tRNA + (sulfur carrier)-H + 5'-deoxyadenosine + L-methionine + A + S-adenosyl-L-homocysteine + 2 H(+). Functionally, catalyzes the methylthiolation of N6-(dimethylallyl)adenosine (i(6)A), leading to the formation of 2-methylthio-N6-(dimethylallyl)adenosine (ms(2)i(6)A) at position 37 in tRNAs that read codons beginning with uridine. This Neorickettsia sennetsu (strain ATCC VR-367 / Miyayama) (Ehrlichia sennetsu) protein is tRNA-2-methylthio-N(6)-dimethylallyladenosine synthase.